Here is an 888-residue protein sequence, read N- to C-terminus: Aconitate hydratase A (888 aa).

C433, C499, and C502 together coordinate [4Fe-4S] cluster.

The protein belongs to the aconitase/IPM isomerase family. Monomer. [4Fe-4S] cluster is required as a cofactor.

The enzyme catalyses citrate = D-threo-isocitrate. It carries out the reaction (2S,3R)-3-hydroxybutane-1,2,3-tricarboxylate = 2-methyl-cis-aconitate + H2O. The protein operates within carbohydrate metabolism; tricarboxylic acid cycle; isocitrate from oxaloacetate: step 2/2. It participates in organic acid metabolism; propanoate degradation. Involved in the catabolism of short chain fatty acids (SCFA) via the tricarboxylic acid (TCA)(acetyl degradation route) and probably the 2-methylcitrate cycle I (propionate degradation route). Catalyzes the reversible isomerization of citrate to isocitrate via cis-aconitate. Could catalyze the hydration of 2-methyl-cis-aconitate to yield (2R,3S)-2-methylisocitrate. The apo form of AcnA functions as a RNA-binding regulatory protein. The polypeptide is Aconitate hydratase A (acn) (Streptococcus mutans serotype c (strain ATCC 700610 / UA159)).